The chain runs to 326 residues: Mitochondrial glycine transporter (326 aa).

3 Solcar repeats span residues 22–106 (SKTT…LRTS), 135–216 (SANL…LKRY), and 228–312 (SSSS…LILR). A run of 6 helical transmembrane segments spans residues 28-53 (FGAG…TRVQ), 81-107 (GTLP…RTSL), 138-163 (LATG…VRYE), 191-214 (GFGA…EQLK), 232-258 (INFV…KTRL), and 287-305 (GLGL…AWTV).

This sequence belongs to the mitochondrial carrier (TC 2.A.29) family. SLC25A38 subfamily.

The protein localises to the mitochondrion inner membrane. The catalysed reaction is glycine(in) = glycine(out). Mitochondrial glycine transporter that imports glycine into the mitochondrial matrix. Plays an important role in providing glycine for the first enzymatic step in heme biosynthesis, the condensation of glycine with succinyl-CoA to produce 5-aminolevulinate (ALA) in the mitochondrial matrix. The protein is Mitochondrial glycine transporter of Emericella nidulans (strain FGSC A4 / ATCC 38163 / CBS 112.46 / NRRL 194 / M139) (Aspergillus nidulans).